Reading from the N-terminus, the 888-residue chain is Interference hedgehog (888 aa).

Positions M1–A24 are cleaved as a signal peptide. At S25 to P688 the chain is on the extracellular side. Ig-like C2-type domains are found at residues P28–E123, E134–A215, P234–L321, and P327–N414. 3 disulfide bridges follow: C51–C106, C155–C203, and C257–C305. N-linked (GlcNAc...) asparagine glycosylation is found at N80, N185, N192, N281, N336, N365, N369, and N455. C348 and C396 are oxidised to a cystine. 2 Fibronectin type-III domains span residues P450–G557 and V565–P660. Heparin contacts are provided by R486 and K493. N516 is a glycosylation site (N-linked (GlcNAc...) asparagine). Position 531 (R531) interacts with heparin. N-linked (GlcNAc...) asparagine glycosylation is present at N547. Residues G655–E667 are compositionally biased toward polar residues. A disordered region spans residues G655–S679. Residue N681 is glycosylated (N-linked (GlcNAc...) asparagine). The chain crosses the membrane as a helical span at residues L689–L709. Topologically, residues C710–V888 are cytoplasmic. Disordered regions lie at residues A759–Y789, S812–V864, and A869–V888. The segment covering Q760 to Q775 has biased composition (low complexity). A compositionally biased stretch (polar residues) spans Q843–N859. The span at S872–V888 shows a compositional bias: low complexity.

It belongs to the immunoglobulin superfamily. IHOG family. In terms of assembly, homodimer. Heterotetramer; 2 iHog chains bind 2 hh chains when facilitated by heparin, heparin is required to promote high-affinity interactions between hh and iHog.

The protein localises to the membrane. Functionally, mediates response to the active Hedgehog (Hh) protein signal in embryos, functioning upstream or at the level of patched (ptc). This Drosophila grimshawi (Hawaiian fruit fly) protein is Interference hedgehog.